We begin with the raw amino-acid sequence, 277 residues long: F420-dependent methylenetetrahydromethanopterin dehydrogenase (277 aa).

Belongs to the MTD family.

It catalyses the reaction 5,10-methylenetetrahydromethanopterin + oxidized coenzyme F420-(gamma-L-Glu)(n) + 2 H(+) = 5,10-methenyl-5,6,7,8-tetrahydromethanopterin + reduced coenzyme F420-(gamma-L-Glu)(n). Its pathway is one-carbon metabolism; methanogenesis from CO(2); 5,10-methylene-5,6,7,8-tetrahydromethanopterin from 5,10-methenyl-5,6,7,8-tetrahydromethanopterin (coenzyme F420 route): step 1/1. In terms of biological role, catalyzes the reversible reduction of methenyl-H(4)MPT(+) to methylene-H(4)MPT. This is F420-dependent methylenetetrahydromethanopterin dehydrogenase from Methanococcus maripaludis (strain C7 / ATCC BAA-1331).